A 295-amino-acid polypeptide reads, in one-letter code: HTH-type transcriptional regulator TrpI (295 aa).

The region spanning 6–63 (PSLNALRAFEAAARLHSISLAAEELHVTHGAVSRQVRLLEDDLGVALFGKDGRGVKLT) is the HTH lysR-type domain. The segment at residues 23–42 (ISLAAEELHVTHGAVSRQVR) is a DNA-binding region (H-T-H motif).

It belongs to the LysR transcriptional regulatory family. In terms of assembly, homotetramer.

Its function is as follows. Activates the expression of the trpBA genes, which encode the two tryptophan synthase subunits, and represses initiation at its own promoter. Acts by binding to two adjacent sites in the intergenic region. In the absence of the inducer indoleglycerol phosphate (InGP), TrpI binds to site I. In the presence of InGP, TrpI binds to site I and site II. Binding to site II is site I dependent. InGP strongly stimulates binding to site II and is required for maximal activation of trpBA. The protein is HTH-type transcriptional regulator TrpI of Pseudomonas aeruginosa (strain ATCC 15692 / DSM 22644 / CIP 104116 / JCM 14847 / LMG 12228 / 1C / PRS 101 / PAO1).